We begin with the raw amino-acid sequence, 1639 residues long: Protein GFS12 (1639 aa).

The 89-residue stretch at Leu206–Asp294 folds into the Protein kinase 1 domain. Positions Leu336–Arg608 constitute a BEACH domain. Residues Ile715–Phe788 enclose the Protein kinase 2 domain. WD repeat units lie at residues Ala1290–Ser1333 and Ala1336–Leu1373. Positions Ser1377–Asn1398 are enriched in low complexity. Positions Ser1377 to Arg1399 are disordered. WD repeat units lie at residues Ala1465–Asp1499, Ala1511–Pro1549, and Arg1609–Cys1639.

This sequence belongs to the protein kinase superfamily. Tyr protein kinase family. As to quaternary structure, interacts (via protein kinase 2 domain) with BCHC1 (via PH-BEACH domain). In terms of tissue distribution, weakly expressed in the cotyledons of germinating seedlings. Restricted to the vascular tissues of cotyledons. Detected in root tips, apical meristem, young flower buds and receptacles.

Functionally, may act predominantly to suppress BCHC1, which itself is a negative factor in protein storage vacuole (PSV) trafficking regulation and plant effector triggered immunity (ETI). Required for ETI, but not for cell death. The chain is Protein GFS12 from Arabidopsis thaliana (Mouse-ear cress).